The sequence spans 304 residues: Undecaprenyl-diphosphatase (304 aa).

8 consecutive transmembrane segments (helical) span residues 5–25 (FLFI…EFVP), 47–67 (GFPE…VVVL), 72–92 (ISSS…LKTS), 111–131 (FGIN…LFHD), 137–157 (LFST…LIVI), 209–231 (ISGL…AMVG), 248–268 (TNWI…LVVI), and 283–303 (FAIY…TKVI).

Belongs to the UppP family.

The protein localises to the cell membrane. It carries out the reaction di-trans,octa-cis-undecaprenyl diphosphate + H2O = di-trans,octa-cis-undecaprenyl phosphate + phosphate + H(+). Its function is as follows. Catalyzes the dephosphorylation of undecaprenyl diphosphate (UPP). Confers resistance to bacitracin. This Clostridium perfringens (strain ATCC 13124 / DSM 756 / JCM 1290 / NCIMB 6125 / NCTC 8237 / Type A) protein is Undecaprenyl-diphosphatase.